The chain runs to 278 residues: DNA repair protein XRCC2 (278 aa).

The residue at position 10 (serine 10) is a Phosphoserine.

It belongs to the RecA family. RAD51 subfamily. In terms of assembly, interacts with RAD51D. Part of the BCDX2 complex consisting of RAD51B, RAD51C, RAD51D and XRCC2; the complex has a ring-like structure arranged into a flat disk around a central channel. In the absence of DNA, the BCDX2 subcomplex XRCC2:RAD51D formed a multimeric ring structure; in the presence of single-stranded DNA it formed a filamentous structure with the ssDNA. In terms of tissue distribution, expressed at low level in somatic tissues and at high level in testis.

The protein resides in the nucleus. Functionally, involved in the homologous recombination repair (HRR) pathway of double-stranded DNA, thought to repair chromosomal fragmentation, translocations and deletions. Part of the RAD51 paralog protein complex BCDX2 which acts in the BRCA1-BRCA2-dependent HR pathway. Upon DNA damage, BCDX2 acts downstream of BRCA2 recruitment and upstream of RAD51 recruitment. BCDX2 binds predominantly to the intersection of the four duplex arms of the Holliday junction and to junction of replication forks. The BCDX2 complex was originally reported to bind single-stranded DNA, single-stranded gaps in duplex DNA and specifically to nicks in duplex DNA. The chain is DNA repair protein XRCC2 (Xrcc2) from Mus musculus (Mouse).